The following is a 718-amino-acid chain: Sodium/myo-inositol cotransporter (718 aa).

At Met-1–Asp-9 the chain is on the extracellular side. The chain crosses the membrane as a helical span at residues Ile-10 to Trp-29. Over Lys-30–Gly-38 the chain is Cytoplasmic. The helical transmembrane segment at Tyr-39 to Val-57 threads the bilayer. Topologically, residues Ser-58–Ala-86 are extracellular. A helical membrane pass occupies residues Leu-87–Pro-110. Over Glu-111 to Gln-123 the chain is Cytoplasmic. The helical transmembrane segment at Val-124–Tyr-144 threads the bilayer. The Extracellular portion of the chain corresponds to Ser-145–Asn-157. The chain crosses the membrane as a helical span at residues Leu-158–Tyr-183. The Cytoplasmic portion of the chain corresponds to Thr-184 to Thr-186. Residues Leu-187–Val-205 form a helical membrane-spanning segment. The Extracellular portion of the chain corresponds to Lys-206–Gly-303. An N-linked (GlcNAc...) asparagine glycan is attached at Asn-232. Residues Phe-304–Phe-324 traverse the membrane as a helical segment. Residues Ala-325–Arg-353 lie on the Cytoplasmic side of the membrane. Residues Leu-354–Met-376 traverse the membrane as a helical segment. At Ser-377–Glu-406 the chain is on the extracellular side. Residues Leu-407 to Val-430 form a helical membrane-spanning segment. Residues Glu-431–Glu-443 are Cytoplasmic-facing. Residues Val-444–Trp-462 traverse the membrane as a helical segment. At Lys-463–His-510 the chain is on the extracellular side. A helical transmembrane segment spans residues Tyr-511 to Leu-532. The Cytoplasmic segment spans residues Thr-533–Lys-695. Residues Ser-594 and Ser-632 each carry the phosphoserine modification. The chain crosses the membrane as a helical span at residues Val-696 to Phe-716. The Extracellular segment spans residues Ser-717–Leu-718.

The protein belongs to the sodium:solute symporter (SSF) (TC 2.A.21) family. Interacts with KCNQ2 (via the pore module). Interacts with KCNQ1; this interaction is direct. Forms coregulatory complexes with ion channels KCNQ2-KCNQ3 and KCNQ1-KCNE2. As to expression, highly expressed in kidney, placenta, and brain and at a lesser extent in thymus, lung, bladder, and testes. Expressed in the choroid plexus epithelium (at protein level).

It localises to the apical cell membrane. Its subcellular location is the basolateral cell membrane. The enzyme catalyses myo-inositol(out) + 2 Na(+)(out) = myo-inositol(in) + 2 Na(+)(in). The catalysed reaction is scyllo-inositol(out) + 2 Na(+)(out) = scyllo-inositol(in) + 2 Na(+)(in). In terms of biological role, electrogenic Na(+)-coupled sugar symporter that actively transports myo-inositol and its stereoisomer scyllo-inositol across the plasma membrane, with a Na(+) to sugar coupling ratio of 2:1. Maintains myo-inositol concentration gradient that defines cell volume and fluid balance during osmotic stress, in particular in the fetoplacental unit and central nervous system. Forms coregulatory complexes with voltage-gated K(+) ion channels, allosterically altering ion selectivity, voltage dependence and gating kinetics of the channel. In turn, K(+) efflux through the channel forms a local electrical gradient that modulates electrogenic Na(+)-coupled myo-inositol influx through the transporter. Associates with KCNQ1-KCNE2 channel in the apical membrane of choroid plexus epithelium and regulates the myo-inositol gradient between blood and cerebrospinal fluid with an impact on neuron excitability. Associates with KCNQ2-KCNQ3 channel altering ion selectivity, increasing Na(+) and Cs(+) permeation relative to K(+) permeation. Provides myo-inositol precursor for biosynthesis of phosphoinositides such as PI(4,5)P2, thus indirectly affecting the activity of phosphoinositide-dependent ion channels and Ca(2+) signaling upon osmotic stress. (Microbial infection) Functions as a retroviral receptor for M813 murine leukemia virus (MuLV) entry. The chain is Sodium/myo-inositol cotransporter (Slc5a3) from Mus musculus (Mouse).